The chain runs to 155 residues: Large ribosomal subunit protein uL13 (155 aa).

This sequence belongs to the universal ribosomal protein uL13 family. As to quaternary structure, part of the 50S ribosomal subunit.

This protein is one of the early assembly proteins of the 50S ribosomal subunit, although it is not seen to bind rRNA by itself. It is important during the early stages of 50S assembly. In Rickettsia felis (strain ATCC VR-1525 / URRWXCal2) (Rickettsia azadi), this protein is Large ribosomal subunit protein uL13.